Consider the following 530-residue polypeptide: uncharacterized protein (530 aa).

This sequence belongs to the protein kinase superfamily. ADCK protein kinase family.

This is an uncharacterized protein from Clostridium pasteurianum.